A 70-amino-acid polypeptide reads, in one-letter code: Turripeptide Gsg9.2 (70 aa).

Positions 1–20 (MKVYCLLLVLLVGLVSQAHG) are cleaved as a signal peptide. The Kazal-like domain occupies 21-70 (QLDKKCQMVCTMDYRPVCGSDGRTYPNKCTLTSTACMSQRSITVFHDGEC). Cystine bridges form between Cys26/Cys56, Cys30/Cys49, and Cys38/Cys70.

This sequence belongs to the conopeptide P-like superfamily. Expressed by the venom duct.

Its subcellular location is the secreted. Its function is as follows. Acts as a neurotoxin by inhibiting an ion channel. May also act as a serine protease inhibitor, since it possess the kazal serine protease inhibitor signature. This is Turripeptide Gsg9.2 from Gemmula sogodensis (Gem-turris).